The primary structure comprises 254 residues: Imidazole glycerol phosphate synthase subunit HisF (254 aa).

Catalysis depends on residues Asp-12 and Asp-131.

This sequence belongs to the HisA/HisF family. In terms of assembly, heterodimer of HisH and HisF.

The protein localises to the cytoplasm. The enzyme catalyses 5-[(5-phospho-1-deoxy-D-ribulos-1-ylimino)methylamino]-1-(5-phospho-beta-D-ribosyl)imidazole-4-carboxamide + L-glutamine = D-erythro-1-(imidazol-4-yl)glycerol 3-phosphate + 5-amino-1-(5-phospho-beta-D-ribosyl)imidazole-4-carboxamide + L-glutamate + H(+). Its pathway is amino-acid biosynthesis; L-histidine biosynthesis; L-histidine from 5-phospho-alpha-D-ribose 1-diphosphate: step 5/9. Functionally, IGPS catalyzes the conversion of PRFAR and glutamine to IGP, AICAR and glutamate. The HisF subunit catalyzes the cyclization activity that produces IGP and AICAR from PRFAR using the ammonia provided by the HisH subunit. In Leifsonia xyli subsp. xyli (strain CTCB07), this protein is Imidazole glycerol phosphate synthase subunit HisF.